We begin with the raw amino-acid sequence, 618 residues long: Proline--tRNA ligase (618 aa).

This sequence belongs to the class-II aminoacyl-tRNA synthetase family. ProS type 1 subfamily. In terms of assembly, homodimer.

Its subcellular location is the cytoplasm. The catalysed reaction is tRNA(Pro) + L-proline + ATP = L-prolyl-tRNA(Pro) + AMP + diphosphate. Functionally, catalyzes the attachment of proline to tRNA(Pro) in a two-step reaction: proline is first activated by ATP to form Pro-AMP and then transferred to the acceptor end of tRNA(Pro). As ProRS can inadvertently accommodate and process non-cognate amino acids such as alanine and cysteine, to avoid such errors it has two additional distinct editing activities against alanine. One activity is designated as 'pretransfer' editing and involves the tRNA(Pro)-independent hydrolysis of activated Ala-AMP. The other activity is designated 'posttransfer' editing and involves deacylation of mischarged Ala-tRNA(Pro). The misacylated Cys-tRNA(Pro) is not edited by ProRS. This Streptococcus uberis (strain ATCC BAA-854 / 0140J) protein is Proline--tRNA ligase.